A 596-amino-acid chain; its full sequence is MSQGKIIKVSGPLVLASGMQEANIQDICRVGDLGLIGEIIEMRRDQASIQVYEETSGLGPGEPVITTGSPLSVELGPGLISQMFDGIQRPLERFQTITASDFLVRGVQLPNLDREAKWDFVPGLSVGDAVEAGDVLGTVQETNLVEHRIMVPVGVSGRLANISAGSFTVEETVYEIEQADGSVFKGTLMQKWPVRRGRPFAQKLIPVEPLVTGQRVIDTFFPVTKGGAAAVPGPFGAGKTVVQHQVAKFANVDIVIYVGCGERGNEMTDVLNEFPELIDPTTGQSIMQRTVLIANTSNMPVAAREASIYTGITIAEYFRDMGYSVAIMADSTSRWAEALREMSGRLEEMPGDEGYPAYLGSRIAEYYERAGRVKTLGSTAREGSITAIGAVSPPGGDISEPVTQNTLRIVKVFWGLDAQLAQRRHFPAINWLSSYSLYLDEVGAYIDQHEKIAWAEKVTKAMNILQKESELQEIVRLVGLDSLSEKDRLTMNAAKMIREDYLQQNAFDDVDTYTSFKKQVALLSNILTFDAEANRALELGAYFREIMEGTVELRDRIARSKFIHEDQLGKIQALSQTIEETLHQILAQGGLDNERH.

ATP is bound at residue G233 to T240.

Belongs to the ATPase alpha/beta chains family.

The catalysed reaction is ATP + H2O + 4 H(+)(in) = ADP + phosphate + 5 H(+)(out). Produces ATP from ADP in the presence of a proton gradient across the membrane. The V-type alpha chain is a catalytic subunit. The sequence is that of V-type ATP synthase alpha chain from Streptococcus sanguinis (strain SK36).